The sequence spans 226 residues: Thiopurine S-methyltransferase (226 aa).

S-adenosyl-L-methionine-binding residues include tryptophan 16, methionine 51, glutamate 72, and arginine 131.

The protein belongs to the class I-like SAM-binding methyltransferase superfamily. TPMT family.

It is found in the cytoplasm. The catalysed reaction is S-adenosyl-L-methionine + a thiopurine = S-adenosyl-L-homocysteine + a thiopurine S-methylether.. The protein is Thiopurine S-methyltransferase of Francisella tularensis subsp. tularensis (strain SCHU S4 / Schu 4).